Consider the following 258-residue polypeptide: Large ribosomal subunit protein bL21 (258 aa).

Basic and acidic residues predominate over residues 140-159 (KAKDAKDEAPKAAPKAEKKK). The interval 140–181 (KAKDAKDEAPKAAPKAEKKKAAPKKAKAEAAPAAADEGTRPA) is disordered.

The protein belongs to the bacterial ribosomal protein bL21 family. In terms of assembly, part of the 50S ribosomal subunit. Contacts protein L20.

This protein binds to 23S rRNA in the presence of protein L20. This Jannaschia sp. (strain CCS1) protein is Large ribosomal subunit protein bL21.